The following is a 159-amino-acid chain: Ribosomal RNA large subunit methyltransferase H (159 aa).

Residues Gly108 and 127 to 132 contribute to the S-adenosyl-L-methionine site; that span reads FGPMTF.

It belongs to the RNA methyltransferase RlmH family. Homodimer.

The protein localises to the cytoplasm. It catalyses the reaction pseudouridine(1915) in 23S rRNA + S-adenosyl-L-methionine = N(3)-methylpseudouridine(1915) in 23S rRNA + S-adenosyl-L-homocysteine + H(+). Specifically methylates the pseudouridine at position 1915 (m3Psi1915) in 23S rRNA. The chain is Ribosomal RNA large subunit methyltransferase H from Magnetococcus marinus (strain ATCC BAA-1437 / JCM 17883 / MC-1).